Reading from the N-terminus, the 47-residue chain is Fasciclin-like arabinogalactan protein (47 aa).

The FAS1 domain maps to 1–47 (APTPATLNGLTIFAPNDEAFKATGVPDLSKLSNAPMVSLLQYHAAAR).

The protein belongs to the fasciclin-like AGP family.

Its function is as follows. May be a cell surface adhesion protein. This Jatropha curcas (Barbados nut) protein is Fasciclin-like arabinogalactan protein.